Consider the following 1340-residue polypeptide: WASH complex subunit 2 (1340 aa).

The sufficient for interaction with WASHC3, WASHC4 and WASHC5; required for interaction with WASHC1 stretch occupies residues 1-219; that stretch reads MNRTTPDQEL…VGSDRGSIVD (219 aa). Phosphoserine is present on residues Ser157, Ser159, Ser204, Ser205, and Ser209. Residues 201-213 are compositionally biased toward low complexity; it reads GELSSEEGSVGSD. The disordered stretch occupies residues 201 to 404; that stretch reads GELSSEEGSV…SSSKPGKKIP (204 aa). The segment covering 219–231 has biased composition (acidic residues); it reads DTEEEKEEEESDE. Basic and acidic residues predominate over residues 232-241; sequence DFAHHSDNDQ. 2 stretches are compositionally biased toward acidic residues: residues 249–258 and 265–275; these read SDEEEDDDGC and EKEEEDIEDIE. A Phosphoserine modification is found at Ser287. Residues 292-306 are compositionally biased toward basic and acidic residues; sequence LAARIKGDAVGRVDE. At Thr330 the chain carries Phosphothreonine. Residues 354-365 are compositionally biased toward gly residues; it reads GSGGGLFSGGKG. The tract at residues 355 to 599 is sufficient for interaction with CCDC93; the sequence is SGGGLFSGGK…QTLSLQAQGE (245 aa). The interaction with VPS35 stretch occupies residues 356–1340; sequence GGGLFSGGKG…DDPLNAFGGQ (985 aa). An LFa 1 motif is present at residues 366 to 377; it reads LFDDEDEESDLF. 2 positions are modified to phosphoserine: Ser394 and Ser396. 3 short sequence motifs (LFa) span residues 410 to 418, 449 to 462, and 481 to 490; these read VFLGDTDVF, LFDDDDGDDDDDFF, and IFGDDEGDLF. Disordered regions lie at residues 421-586, 618-663, and 695-838; these read ASVP…GGTA, SSDE…KASL, and DSGG…STGV. Over residues 450–461 the composition is skewed to acidic residues; it reads FDDDDGDDDDDF. A compositionally biased stretch (basic and acidic residues) spans 506–516; the sequence is DENKARAEKKV. Residues 517 to 527 are compositionally biased toward low complexity; it reads SLPSSKNLKPS. Short sequence motifs (LFa) lie at residues 536–547, 571–582, and 616–628; these read LFSDEEDSEDLF, LFEDEDEEDNLF, and LFSSDEEDQWNIP. Phosphoserine occurs at positions 538 and 543. Low complexity predominate over residues 546-566; the sequence is LFSSQSASKLKGAPLLPGKLP. 2 positions are modified to phosphoserine: Ser618 and Ser619. Positions 636–646 are enriched in basic and acidic residues; sequence SDSRSKGESRD. 3 consecutive short sequence motifs (LFa) follow at residues 663–673, 689–701, and 725–737; these read LFEEDEEDDLF, LFEDDVDSGGSLF, and LFSDEEEKEAQLG. Phosphoserine is present on residues Ser727, Ser751, Ser786, and Ser801. Over residues 740–767 the composition is skewed to basic and acidic residues; sequence PVDKKVESAKESLKFGRTDVAESEKEGL. Residues 802–816 carry the LFa 11 motif; it reads LFDEEEDKMEDQNTI. Over residues 822–833 the composition is skewed to basic and acidic residues; that stretch reads EVGKGRDPDARP. 2 consecutive short sequence motifs (LFa) follow at residues 838 to 846 and 855 to 861; these read VFQDEELLF and DPDVDLF. A phosphoserine mark is found at Ser873 and Ser876. Positions 877-887 match the LFa 14 motif; sequence LFGDDEDDDLF. Disordered stretches follow at residues 906-950 and 987-1205; these read DYSV…KEPS and FPSS…EDED. Residues 916 to 930 are compositionally biased toward basic and acidic residues; it reads KHPETIQGIKEKGIW. Residues 936–1340 form an interaction with phospholipids region; sequence QDSSGLAPFK…DDPLNAFGGQ (405 aa). Positions 1027–1045 are enriched in basic residues; that stretch reads NKSRVKMRGKRRPQTRAAR. Positions 1028–1046 are required for interaction with F-actin-capping protein subunit alpha (CAPZA1 or CAPZA2 or CAPZA3); that stretch reads KSRVKMRGKRRPQTRAARR. A phosphoserine mark is found at Ser1053 and Ser1086. The segment covering 1093–1109 has biased composition (low complexity); the sequence is EALAAAAAPWEGGPVPG. Position 1113 is a phosphoserine (Ser1113). 6 consecutive short sequence motifs (LFa) follow at residues 1128-1135, 1170-1184, 1200-1208, 1233-1239, 1261-1269, and 1289-1298; these read LFDSGDIF, MFPALGEASSDDDLF, LLEDEDDLF, IFEDDIF, LFDDNIDIF, and IFDDDMDDIF. Phosphoserine occurs at positions 1178 and 1179. The segment at 1301 to 1325 is disordered; sequence GIQAKTAKPKSRSAQAAPEPRFEHK. Positions 1329-1337 match the LFa 21 motif; sequence IFDDPLNAF.

Belongs to the FAM21 family. As to quaternary structure, component of the WASH core complex also described as WASH regulatory complex (SHRC) composed of WASHC1, WASHC2, WASHC3, WASHC4 and WASHC5; in the complex interacts (via N-terminus) directly with WASHC1. The WASH core complex associates with the F-actin-capping protein dimer (formed by CAPZA1, CAPZA2 or CAPZA3 and CAPZB) in a transient or substoichiometric manner which was initially described as WASH complex. Interacts with VPS35; mediates the association with the retromer CSC complex. Interacts with FKBP15. Interacts with CCDC93, CCDC22, VPS35L; indicative for an association of the WASH core complex with the CCC and retriever complexes. Directly interacts with TBC1D23.

The protein localises to the early endosome membrane. It is found in the cell membrane. Functionally, acts as a component of the WASH core complex that functions as a nucleation-promoting factor (NPF) at the surface of endosomes, where it recruits and activates the Arp2/3 complex to induce actin polymerization, playing a key role in the fission of tubules that serve as transport intermediates during endosome sorting. Mediates the recruitment of the WASH core complex to endosome membranes via binding to phospholipids and VPS35 of the retromer CSC. Mediates the recruitment of the F-actin-capping protein dimer to the WASH core complex probably promoting localized F-actin polymerization needed for vesicle scission. Via its C-terminus binds various phospholipids, most strongly phosphatidylinositol 4-phosphate (PtdIns-(4)P), phosphatidylinositol 5-phosphate (PtdIns-(5)P) and phosphatidylinositol 3,5-bisphosphate (PtdIns-(3,5)P2). Involved in the endosome-to-plasma membrane trafficking and recycling of SNX27-retromer-dependent cargo proteins, such as GLUT1. Required for the association of DNAJC13, ENTR1, ANKRD50 with retromer CSC subunit VPS35. Required for the endosomal recruitment of CCC and retriever complexes subunits COMMD1 and CCDC93 as well as the retrievere complex subunit VPS35L. The protein is WASH complex subunit 2 of Pongo abelii (Sumatran orangutan).